The sequence spans 261 residues: Ribonuclease PH (261 aa).

Residues R86 and 124–126 (GTR) each bind phosphate.

The protein belongs to the RNase PH family. In terms of assembly, homohexameric ring arranged as a trimer of dimers.

It carries out the reaction tRNA(n+1) + phosphate = tRNA(n) + a ribonucleoside 5'-diphosphate. Phosphorolytic 3'-5' exoribonuclease that plays an important role in tRNA 3'-end maturation. Removes nucleotide residues following the 3'-CCA terminus of tRNAs; can also add nucleotides to the ends of RNA molecules by using nucleoside diphosphates as substrates, but this may not be physiologically important. Probably plays a role in initiation of 16S rRNA degradation (leading to ribosome degradation) during starvation. This Persephonella marina (strain DSM 14350 / EX-H1) protein is Ribonuclease PH.